The following is a 72-amino-acid chain: MNQVMTIFLVLGVIVYSVESSLTPSSDIPWEKCRHDCFAKYMSCQMSDSCHNKPSCRQCQVTYAICVSTGCP.

A signal peptide spans 1-20; sequence MNQVMTIFLVLGVIVYSVES. Intrachain disulfides connect cysteine 33–cysteine 71, cysteine 37–cysteine 66, cysteine 44–cysteine 59, and cysteine 50–cysteine 56.

This sequence belongs to the Acrorhagin I family. In terms of tissue distribution, expressed by acrorhagi.

It localises to the secreted. The protein localises to the nematocyst. In terms of biological role, toxin that is lethal to crab. It interacts with divalent metal ions (zinc and nickel) suggesting it may function as a metal ion chelator to regulate metal ion levels or as a metal ion transporter, or that its function is modulated by metal ions. Is not active against any of the voltage-gated potassium and sodium channels tested. In addition, it does not show activity in bacterial and fungal growth inhibitory assays as well as in hemolytic assays. The sequence is that of U-actitoxin-Aeq5b from Actinia equina (Beadlet anemone).